A 206-amino-acid polypeptide reads, in one-letter code: Large ribosomal subunit protein eL13 (206 aa).

A compositionally biased stretch (basic and acidic residues) spans E184–K193. Positions E184–A206 are disordered.

The protein belongs to the eukaryotic ribosomal protein eL13 family.

In Tetrahymena thermophila (strain SB210), this protein is Large ribosomal subunit protein eL13 (RPL13).